The sequence spans 125 residues: Glycoprotein hormones alpha chain (125 aa).

The N-terminal stretch at 1–30 (MVSAVTTMGCMKAAGVSLLLLYFLLNAADS) is a signal peptide. 5 disulfides stabilise this stretch: C41–C64, C44–C93, C61–C114, C65–C116, and C92–C119. N-linked (GlcNAc...) asparagine glycosylation is found at N85 and N110.

Belongs to the glycoprotein hormones subunit alpha family. In terms of assembly, heterodimer. Glycoprotein hormones are heterodimers composed of a common alpha chain described here and a unique beta chain which confers their biological specificity to the different hormones.

The protein localises to the secreted. In terms of biological role, shared alpha chain of heterodimeric glycoprotein hormones. These hormones bind specific receptors on target cells that in turn activate downstream signaling pathways. Involved in gametogenesis and steroidogenesis. The protein is Glycoprotein hormones alpha chain (cga) of Fundulus heteroclitus (Killifish).